A 281-amino-acid polypeptide reads, in one-letter code: N-acetylmuramic acid 6-phosphate etherase (281 aa).

One can recognise an SIS domain in the interval 63-226; that stretch reads IVPRMKQGGR…TTSVMIQLGR (164 aa). The Proton donor role is filled by Glu-91. Glu-122 is an active-site residue.

Belongs to the GCKR-like family. MurNAc-6-P etherase subfamily. As to quaternary structure, homodimer.

It carries out the reaction N-acetyl-D-muramate 6-phosphate + H2O = N-acetyl-D-glucosamine 6-phosphate + (R)-lactate. Its pathway is amino-sugar metabolism; N-acetylmuramate degradation. Functionally, specifically catalyzes the cleavage of the D-lactyl ether substituent of MurNAc 6-phosphate, producing GlcNAc 6-phosphate and D-lactate. This Bacteroides fragilis (strain ATCC 25285 / DSM 2151 / CCUG 4856 / JCM 11019 / LMG 10263 / NCTC 9343 / Onslow / VPI 2553 / EN-2) protein is N-acetylmuramic acid 6-phosphate etherase.